The following is a 602-amino-acid chain: Protein SHORT-ROOT 1 (602 aa).

Low complexity predominate over residues 12-55 (AASEQQQQQQQSASYNSRSTTSSGSRSSSHQTNASYSYYHHSSN). 3 disordered regions span residues 12–69 (AASE…YYYG), 101–145 (DFSS…TAAG), and 165–185 (DFSS…AVGG). Positions 56-68 (SGGGGGGGGGYYY) are enriched in gly residues. The segment covering 122 to 145 (PPASSTPTGTAPTPPLSTSSTAAG) has biased composition (low complexity). Over residues 173–185 (SGGGTASSGAVGG) the composition is skewed to gly residues. Residues 183 to 601 (VGGGGGGRWA…QPLVWASAWR (419 aa)) enclose the GRAS domain. Residues 190–253 (RWASQLLLEC…LTASGPRTLR (64 aa)) form a leucine repeat I (LRI) region. Positions 272-349 (ALRFQELSPW…PHLSITTVVS (78 aa)) are VHIID. A VHIID motif is present at residues 311-315 (FHILD). The tract at residues 365–401 (EIGQRMEKFARLMGVPFRFRAVHHSGDLAELDLDALD) is leucine repeat II (LRII). The PFYRE stretch occupies residues 411–517 (LAVNCVNSLR…ERGAGRAIVD (107 aa)). Positions 520-601 (SCPASESMER…QPLVWASAWR (82 aa)) are SAW.

It belongs to the GRAS family. As to quaternary structure, interacts with SCR1. Interacts with SMOS1. Expressed in leaves and roots. Detected in the stele, the endodermis and part of the cortex.

It localises to the nucleus. Its function is as follows. Transcription factor required for the asymmetric cell division involved in radial pattern formation in roots. Essential for both cell division and cell specification. This chain is Protein SHORT-ROOT 1, found in Oryza sativa subsp. japonica (Rice).